Reading from the N-terminus, the 223-residue chain is Putative UPF0607 protein LOC392364 (223 aa).

Residues 110–138 show a composition bias toward basic and acidic residues; the sequence is KMEVRAEEPKEATEVKDQVETQEQEDNKR. Residues 110–223 form a disordered region; it reads KMEVRAEEPK…GRTPPARQHG (114 aa). Composition is skewed to polar residues over residues 145-163 and 174-186; these read EAAS…TSPR and QLKS…QTDK.

The protein belongs to the UPF0607 family.

The chain is Putative UPF0607 protein LOC392364 from Homo sapiens (Human).